The chain runs to 92 residues: Small ribosomal subunit protein uS15 (92 aa).

The protein belongs to the universal ribosomal protein uS15 family. Part of the 30S ribosomal subunit. Forms a bridge to the 50S subunit in the 70S ribosome, contacting the 23S rRNA.

In terms of biological role, one of the primary rRNA binding proteins, it binds directly to 16S rRNA where it helps nucleate assembly of the platform of the 30S subunit by binding and bridging several RNA helices of the 16S rRNA. Forms an intersubunit bridge (bridge B4) with the 23S rRNA of the 50S subunit in the ribosome. This Symbiobacterium thermophilum (strain DSM 24528 / JCM 14929 / IAM 14863 / T) protein is Small ribosomal subunit protein uS15.